Here is a 60-residue protein sequence, read N- to C-terminus: Large ribosomal subunit protein bL32 (60 aa).

Residues Met1–Arg16 show a composition bias toward basic residues. The tract at residues Met1–Ser60 is disordered. Positions Arg17 to Leu44 are enriched in basic and acidic residues.

The sequence is that of Large ribosomal subunit protein bL32 from Rhodopseudomonas palustris (strain ATCC BAA-98 / CGA009).